A 772-amino-acid chain; its full sequence is Tubulin monoglycylase TTLL3 (772 aa).

A disordered region spans residues 50–81 (PTLLPPQKDLDSSAMGDSDTTEDEDEDEDEEF). Residues 68–81 (DTTEDEDEDEDEEF) show a composition bias toward acidic residues. Positions 151–510 (ARNVLKLVVK…RMLDRNCDTG (360 aa)) constitute a TTL domain. ATP is bound by residues K283, 289–290 (RG), 321–324 (QKYI), 334–336 (KFD), and 378–379 (CN). R289 lines the a protein pocket. An L-glutamate-binding site is contributed by S381. Residues D456, E469, and N471 each contribute to the Mg(2+) site. Position 469 (E469) interacts with ATP.

Mg(2+) is required as a cofactor. In terms of tissue distribution, expressed in brain, heart, kidney, testis, liver, lung, muscle, spleen, trachea and colon.

It localises to the cytoplasm. It is found in the cytoskeleton. The protein resides in the cell projection. The protein localises to the cilium. Its subcellular location is the cilium axoneme. It localises to the flagellum axoneme. It catalyses the reaction L-glutamyl-[protein] + glycine + ATP = glycyl-L-glutamyl-[protein] + ADP + phosphate + H(+). Its function is as follows. Monoglycylase which modifies alpha- and beta-tubulin, adding a single glycine on the gamma-carboxyl groups of specific glutamate residues to generate monoglycine side chains within the C-terminal tail of tubulin. Not involved in elongation step of the polyglycylation reaction. Preferentially glycylates a beta-tail peptide over the alpha-tail, although shifts its preference toward alpha-tail as beta-tail glutamylation increases. Competes with polyglutamylases for modification site on beta-tubulin substrate, thereby creating an anticorrelation between glycylation and glutamylation reactions. Together with TTLL8, mediates microtubule glycylation of primary and motile cilia, which is essential for their stability and maintenance. Involved in microtubule glycylation of primary cilia in colon which controls cell proliferation of epithelial cells and plays an essential role in colon cancer development. Together with TTLL8, glycylates sperm flagella which regulates axonemal dynein motor activity, thereby controlling flagellar beat, directional sperm swimming and male fertility. The polypeptide is Tubulin monoglycylase TTLL3 (Homo sapiens (Human)).